A 173-amino-acid polypeptide reads, in one-letter code: Large ribosomal subunit protein uL10 (173 aa).

The protein belongs to the universal ribosomal protein uL10 family. As to quaternary structure, part of the ribosomal stalk of the 50S ribosomal subunit. The N-terminus interacts with L11 and the large rRNA to form the base of the stalk. The C-terminus forms an elongated spine to which L12 dimers bind in a sequential fashion forming a multimeric L10(L12)X complex.

Functionally, forms part of the ribosomal stalk, playing a central role in the interaction of the ribosome with GTP-bound translation factors. The sequence is that of Large ribosomal subunit protein uL10 from Bifidobacterium adolescentis (strain ATCC 15703 / DSM 20083 / NCTC 11814 / E194a).